A 535-amino-acid polypeptide reads, in one-letter code: Ankyrin repeat domain-containing protein 34C (535 aa).

ANK repeat units follow at residues 10–39 (TDGN…YINE), 43–80 (KGET…DPNI), 84–114 (SGKT…DPSL), and 118–147 (TGAS…AKGK). 2 disordered regions span residues 159–181 (SGTK…DRHS) and 214–237 (AGHP…RKVS). Residues 216 to 225 (HPSSCNTSKA) are compositionally biased toward polar residues. Position 301 is a phosphoserine (Ser301). The interval 381-444 (DLDIQPGPDP…RRRPPHLLER (64 aa)) is disordered. Position 447 is a phosphoserine (Ser447).

This sequence belongs to the ANKRD34 family.

The protein is Ankyrin repeat domain-containing protein 34C (ANKRD34C) of Homo sapiens (Human).